The primary structure comprises 491 residues: MTRSYQIRTYGCQMNVHDSERLAGMLEDAGYVRAGTDVDPDVVVFNTCAVRENADNRLYGNLGHLRPAKDRNPGMQIAVGGCLAQKDRGEIVKRAPWVDVVFGTHNLGSLPTLLERARHNEEAEVEILESLDVFPSTLPARRESAYSGWVSVSVGCNNTCTFCIVPALRGKEKDRRPGEILSEVQALVSEGVLEVTLLGQNVNAYGVEFGDRFAFGKLLRSCGEIEGLERVRFTSPHPRDFTDDVIAAMAETPNVCHQLHMPLQSGSDRVLKQMRRSYRSQRYLDILRKVREAMPDAAITTDIIVGFPGETEEDFEATMQVVREARFASAFTFQYSKRPGTPAAEMEGQLPKEVVQQRYDRLIELQNQISWDVGKELVGRSVELLVAEGEGRKDTETHRLSGRARDGRLVHFTPVGAVDGQVRPGDVVHTTITRAAPHHLVADSEITAHRRTRAGDHWEEGVRPKTSGVSLGLPSFGAPPAQPAAQQGCAC.

An MTTase N-terminal domain is found at 3–119 (RSYQIRTYGC…LPTLLERARH (117 aa)). Cysteine 12, cysteine 48, cysteine 82, cysteine 156, cysteine 160, and cysteine 163 together coordinate [4Fe-4S] cluster. Residues 142-372 (RESAYSGWVS…IELQNQISWD (231 aa)) enclose the Radical SAM core domain. In terms of domain architecture, TRAM spans 375–446 (KELVGRSVEL…PHHLVADSEI (72 aa)).

Belongs to the methylthiotransferase family. MiaB subfamily. In terms of assembly, monomer. Requires [4Fe-4S] cluster as cofactor.

Its subcellular location is the cytoplasm. The enzyme catalyses N(6)-dimethylallyladenosine(37) in tRNA + (sulfur carrier)-SH + AH2 + 2 S-adenosyl-L-methionine = 2-methylsulfanyl-N(6)-dimethylallyladenosine(37) in tRNA + (sulfur carrier)-H + 5'-deoxyadenosine + L-methionine + A + S-adenosyl-L-homocysteine + 2 H(+). Catalyzes the methylthiolation of N6-(dimethylallyl)adenosine (i(6)A), leading to the formation of 2-methylthio-N6-(dimethylallyl)adenosine (ms(2)i(6)A) at position 37 in tRNAs that read codons beginning with uridine. This Saccharopolyspora erythraea (strain ATCC 11635 / DSM 40517 / JCM 4748 / NBRC 13426 / NCIMB 8594 / NRRL 2338) protein is tRNA-2-methylthio-N(6)-dimethylallyladenosine synthase.